A 1049-amino-acid polypeptide reads, in one-letter code: Isoleucine--tRNA ligase (1049 aa).

Residues 48 to 59 (PYPSSPTPHIGT) carry the 'HIGH' region motif. Residues 597-601 (EMHKS) carry the 'KMSKS' region motif. Lysine 600 contributes to the ATP binding site.

This sequence belongs to the class-I aminoacyl-tRNA synthetase family. IleS type 2 subfamily. As to quaternary structure, monomer. Zn(2+) serves as cofactor.

The protein localises to the cytoplasm. The catalysed reaction is tRNA(Ile) + L-isoleucine + ATP = L-isoleucyl-tRNA(Ile) + AMP + diphosphate. Its function is as follows. Catalyzes the attachment of isoleucine to tRNA(Ile). As IleRS can inadvertently accommodate and process structurally similar amino acids such as valine, to avoid such errors it has two additional distinct tRNA(Ile)-dependent editing activities. One activity is designated as 'pretransfer' editing and involves the hydrolysis of activated Val-AMP. The other activity is designated 'posttransfer' editing and involves deacylation of mischarged Val-tRNA(Ile). This chain is Isoleucine--tRNA ligase, found in Saccharolobus islandicus (strain M.16.27) (Sulfolobus islandicus).